A 1032-amino-acid polypeptide reads, in one-letter code: Protein phosphatase 1 regulatory subunit 12A (1032 aa).

Positions 35-38 match the KVKF motif motif; sequence KVKF. 6 ANK repeats span residues 39–68, 72–101, 105–134, 138–164, 198–227, and 231–260; these read DDGAVFLAACSSGDTDEVLKLLHRGADINY, DGLTALHQACIDDNVDMVKFLVENGANINQ, EGWIPLHAAASCGYLDIAEFLIGQGAHVGA, EGDTPLDIAEEEAMEELLQNEVNRQGV, SGGTALHVAAAKGYTEVLKLLIQAGYDVNI, and DGWTPLHAAAHWGKEEACRILVDNLCDMET. (3S)-3-hydroxyasparagine; by HIF1AN is present on residues asparagine 67 and asparagine 100. Asparagine 226 is subject to (3S)-3-hydroxyasparagine; by HIF1AN. Disordered stretches follow at residues 290–553 and 588–928; these read LHSE…HRSC and SSTS…RLEK. Residues 291-300 are compositionally biased toward basic and acidic residues; sequence HSEKRDKKSP. At serine 299 the chain carries Phosphoserine. A compositionally biased stretch (polar residues) spans 302–316; sequence IESTANMENNQPQKT. Residues 318–340 are compositionally biased toward basic and acidic residues; sequence KNKETLIIEPEKNASRIESLEQE. Positions 357-369 are enriched in acidic residues; that stretch reads SEEDEEDDSESEA. Residues 383-399 are compositionally biased toward low complexity; sequence AHTASTQAAPAAVTTPT. The segment covering 400–421 has biased composition (polar residues); the sequence is LSSNQGTPTSPVKKFPTSTTKI. Serine 422 and serine 432 each carry phosphoserine. Over residues 422 to 432 the composition is skewed to basic and acidic residues; sequence SPKEEERKDES. A Phosphothreonine modification is found at threonine 443. Serine 445 is modified (phosphoserine). Tyrosine 446 carries the post-translational modification Phosphotyrosine. Residues 469 to 480 are compositionally biased toward low complexity; sequence RSASSPRLSSSL. Phosphoserine; by NUAK1 is present on serine 472. Serine 473 bears the Phosphoserine; by CDK1 mark. At serine 477 the chain carries Phosphoserine. Residues 481-491 are compositionally biased toward basic and acidic residues; it reads DNKEKEKDNKG. A phosphoserine mark is found at serine 507 and serine 509. The segment covering 540-551 has biased composition (polar residues); sequence NSSINEGSTYHR. Serine 601 is modified (phosphoserine). Over residues 602–612 the composition is skewed to polar residues; the sequence is PAGTQSSTSNR. A compositionally biased stretch (basic and acidic residues) spans 614–625; it reads WAEDSTEKEKDS. Serine 618 bears the Phosphoserine mark. Positions 633 to 661 are enriched in low complexity; it reads LVAPTVVSAAASSTTALTTTTAGTLSSTS. Positions 674-683 are enriched in basic and acidic residues; it reads VRDEESESQR. The segment at 683–866 is interaction with ROCK2; sequence RKARSRQARQ…VSFWTQDSDE (184 aa). Over residues 684–694 the composition is skewed to basic residues; the sequence is KARSRQARQSR. Phosphoserine; by PKA and PKG; in vitro occurs at positions 693 and 696. Threonine 697 is subject to Phosphothreonine; by ROCK1, ROCK2, CDC42BP, ZIPK/DAPK3 and RAF1. The span at 719–768 shows a compositional bias: basic and acidic residues; the sequence is RTREQENEEKDKEEKEKQDKEKQEEKKESEVSREDEYKQKYSRTYDETYA. Over residues 774–797 the composition is skewed to low complexity; that stretch reads STSSSSTPSSSSLSTLGSSLYASS. Residues 798–812 show a composition bias toward polar residues; the sequence is QLNRPNSLVGITSAY. Serine 804 is modified (phosphoserine). Positions 816 to 842 are enriched in basic and acidic residues; the sequence is LTKDNEREGEKKEEEKEGEDKSQPKSI. Residues 843-854 show a composition bias toward basic residues; sequence RERRRPREKRRS. The residue at position 854 (serine 854) is a Phosphoserine; by ROCK2. A phosphoserine mark is found at serine 864 and serine 873. Basic and acidic residues predominate over residues 869–885; sequence QERQSDTEDGSSKRDTQ. Low complexity predominate over residues 886-900; that stretch reads TDSVSRYDSSSTSSS. Phosphoserine occurs at positions 905 and 910. Residue serine 912 is modified to Phosphoserine; by NUAK1. The segment covering 916 to 928 has biased composition (basic and acidic residues); that stretch reads LEERKPYGSRLEK. Serine 997 bears the Phosphoserine mark.

As to quaternary structure, PP1 comprises a catalytic subunit, PPP1CA, PPP1CB or PPP1CC, and one or several targeting or regulatory subunits. PPP1R12A mediates binding to myosin. Interacts with ARHA and CIT. Binds PPP1R12B, ROCK1 and IL16. Interacts directly with PRKG1. Non-covalent dimer of 2 dimers; PRKG1-PRKG1 and PPP1R12A-PPP1R12A. Interacts with SMTNL1. Interacts with PPP1CB; the interaction is direct. Interacts (when phosphorylated at Ser-445, Ser-472 and Ser-910) with 14-3-3. Interacts with ROCK1 and ROCK2. Interacts with isoform 1 and isoform 2 of ZIPK/DAPK3. Interacts with RAF1. Interacts with HIF1AN. Interacts with NCKAP1L. In terms of processing, phosphorylated on upon DNA damage, probably by ATM or ATR. Phosphorylated by CIT (Rho-associated kinase). Phosphorylated cooperatively by ROCK1 and CDC42BP on Thr-697. In vitro, phosphorylation of Ser-696 by PKA and PKG appears to prevent phosphorylation of the inhibitory site Thr-697, probably mediated by PRKG1. May be phosphorylated at Thr-697 by DMPK; may inhibit the myosin phosphatase activity. Phosphorylated at Ser-473 by CDK1 during mitosis, creating docking sites for the POLO box domains of PLK1. Subsequently, PLK1 binds and phosphorylates PPP1R12A. As to expression, smooth muscle. Detected in aorta, portal vein, stomach, intestine, bladder and lung.

It localises to the cytoplasm. Its subcellular location is the cytoskeleton. The protein localises to the stress fiber. In terms of biological role, key regulator of protein phosphatase 1C (PPP1C). Mediates binding to myosin. As part of the PPP1C complex, involved in dephosphorylation of PLK1. Capable of inhibiting HIF1AN-dependent suppression of HIF1A activity. This chain is Protein phosphatase 1 regulatory subunit 12A, found in Rattus norvegicus (Rat).